The primary structure comprises 118 residues: Thioredoxin H-type (118 aa).

The Thioredoxin domain maps to 2 to 114; the sequence is AAEEGQVIGC…LQQTIAKHMA (113 aa). Active-site nucleophile residues include C40 and C43. C40 and C43 form a disulfide bridge.

Belongs to the thioredoxin family. Plant H-type subfamily.

The protein resides in the cytoplasm. In terms of biological role, participates in various redox reactions through the reversible oxidation of the active center dithiol to a disulfide. The H form is known to activate a number of cytosolic enzymes. This chain is Thioredoxin H-type, found in Ricinus communis (Castor bean).